The following is a 202-amino-acid chain: ATP-dependent Clp protease proteolytic subunit (202 aa).

Catalysis depends on Ser-106, which acts as the Nucleophile. His-131 is an active-site residue.

Belongs to the peptidase S14 family. As to quaternary structure, fourteen ClpP subunits assemble into 2 heptameric rings which stack back to back to give a disk-like structure with a central cavity, resembling the structure of eukaryotic proteasomes.

Its subcellular location is the cytoplasm. The enzyme catalyses Hydrolysis of proteins to small peptides in the presence of ATP and magnesium. alpha-casein is the usual test substrate. In the absence of ATP, only oligopeptides shorter than five residues are hydrolyzed (such as succinyl-Leu-Tyr-|-NHMec, and Leu-Tyr-Leu-|-Tyr-Trp, in which cleavage of the -Tyr-|-Leu- and -Tyr-|-Trp bonds also occurs).. In terms of biological role, cleaves peptides in various proteins in a process that requires ATP hydrolysis. Has a chymotrypsin-like activity. Plays a major role in the degradation of misfolded proteins. This is ATP-dependent Clp protease proteolytic subunit from Albidiferax ferrireducens (strain ATCC BAA-621 / DSM 15236 / T118) (Rhodoferax ferrireducens).